A 140-amino-acid chain; its full sequence is Nucleoside diphosphate kinase (140 aa).

ATP contacts are provided by Lys11, Phe59, Arg87, Thr93, Arg104, and Asn114. Catalysis depends on His117, which acts as the Pros-phosphohistidine intermediate.

The protein belongs to the NDK family. Homotetramer. It depends on Mg(2+) as a cofactor.

It is found in the cytoplasm. It catalyses the reaction a 2'-deoxyribonucleoside 5'-diphosphate + ATP = a 2'-deoxyribonucleoside 5'-triphosphate + ADP. It carries out the reaction a ribonucleoside 5'-diphosphate + ATP = a ribonucleoside 5'-triphosphate + ADP. Major role in the synthesis of nucleoside triphosphates other than ATP. The ATP gamma phosphate is transferred to the NDP beta phosphate via a ping-pong mechanism, using a phosphorylated active-site intermediate. The polypeptide is Nucleoside diphosphate kinase (Rhizorhabdus wittichii (strain DSM 6014 / CCUG 31198 / JCM 15750 / NBRC 105917 / EY 4224 / RW1) (Sphingomonas wittichii)).